The following is a 219-amino-acid chain: Cytidylate kinase (219 aa).

21 to 29 (GPAASGKGT) serves as a coordination point for ATP.

Belongs to the cytidylate kinase family. Type 1 subfamily.

It is found in the cytoplasm. The enzyme catalyses CMP + ATP = CDP + ADP. It catalyses the reaction dCMP + ATP = dCDP + ADP. In Rickettsia prowazekii (strain Madrid E), this protein is Cytidylate kinase.